Reading from the N-terminus, the 661-residue chain is Pentatricopeptide repeat-containing protein At5g66631 (661 aa).

9 PPR repeats span residues 139–173 (VHFSFMNLLNLYATAGDFDSVLKTWDEYRCSGEEK), 176–210 (CTESYNIVMQVYMTLGKDSEAVQTFDQIINEGGIP), 211–245 (NSRTFTIMIEHLVKLGNLDAAMKIFETLPLMRITR), 246–280 (TLKHYSVLVEAFVDAQRFDEVKTLIAEMKSDGKFP), 410–444 (DAYTIERMMAMLARNGQVELVDKLISKVRIEGIKL), 445–475 (PFSTIRLIIDLYGISKKPEAAIKVFNEDRTL), 484–518 (LMLLYSSLLRTLTKCKRNAEALETLEDMMLTGVSP), 519–553 (DIQTFSGLMYHFALQGEIQTVERLFSMVRQIGLEP), and 554–588 (DPYMLKLLVQAYCRCERSVLAYRVFQDMKDSNLMP).

This sequence belongs to the PPR family. P subfamily.

The sequence is that of Pentatricopeptide repeat-containing protein At5g66631 from Arabidopsis thaliana (Mouse-ear cress).